Here is a 239-residue protein sequence, read N- to C-terminus: Sugar fermentation stimulation protein homolog (239 aa).

The protein belongs to the SfsA family.

This chain is Sugar fermentation stimulation protein homolog, found in Mannheimia succiniciproducens (strain KCTC 0769BP / MBEL55E).